A 236-amino-acid chain; its full sequence is Pyridoxal phosphate homeostasis protein (236 aa).

Lysine 36 bears the N6-(pyridoxal phosphate)lysine mark.

This sequence belongs to the pyridoxal phosphate-binding protein YggS/PROSC family.

Functionally, pyridoxal 5'-phosphate (PLP)-binding protein, which is involved in PLP homeostasis. This Vibrio cholerae serotype O1 (strain ATCC 39315 / El Tor Inaba N16961) protein is Pyridoxal phosphate homeostasis protein.